We begin with the raw amino-acid sequence, 372 residues long: Tyrosine--tRNA ligase (372 aa).

L-tyrosine contacts are provided by Tyr-37, Tyr-169, Gln-173, Asp-176, and Gln-191. Residues 246-250 carry the 'KMSKS' region motif; the sequence is KMSKS. Lys-249 serves as a coordination point for ATP.

This sequence belongs to the class-I aminoacyl-tRNA synthetase family. TyrS type 4 subfamily. Homodimer.

Its subcellular location is the cytoplasm. The enzyme catalyses tRNA(Tyr) + L-tyrosine + ATP = L-tyrosyl-tRNA(Tyr) + AMP + diphosphate + H(+). Functionally, catalyzes the attachment of tyrosine to tRNA(Tyr) in a two-step reaction: tyrosine is first activated by ATP to form Tyr-AMP and then transferred to the acceptor end of tRNA(Tyr). The chain is Tyrosine--tRNA ligase from Pyrobaculum calidifontis (strain DSM 21063 / JCM 11548 / VA1).